We begin with the raw amino-acid sequence, 360 residues long: uncharacterized protein (360 aa).

Helical transmembrane passes span 26–48 (SVCY…SGAT), 58–80 (LHPL…ASVL), 89–111 (VMGL…NIAH), 126–148 (LSTG…SILA), 169–191 (RLAY…PTAL), 195–214 (IPSV…YALL), and 227–249 (CALC…SHMV).

Its subcellular location is the cell membrane. This is an uncharacterized protein from Treponema pallidum (strain Nichols).